The following is a 65-amino-acid chain: Muscarinic toxin 3 (65 aa).

4 disulfides stabilise this stretch: Cys-3–Cys-24, Cys-17–Cys-42, Cys-46–Cys-57, and Cys-58–Cys-63.

Belongs to the three-finger toxin family. Short-chain subfamily. Aminergic toxin sub-subfamily. In terms of tissue distribution, expressed by the venom gland.

It is found in the secreted. In terms of biological role, potent antagonist (IC(50)=1-10 nM) of M4 (CHRM4) muscarinic receptors, and CHRM1, ADRA1A, ADRA2A and ADRA2C adrenergic receptors. Also antagonises ADRA1B and ADRA1D adrenergic receptors with a 10-times lower affinity. The chain is Muscarinic toxin 3 from Dendroaspis angusticeps (Eastern green mamba).